A 269-amino-acid chain; its full sequence is Interleukin-1 beta (269 aa).

A propeptide spanning residues 1-112 is cleaved from the precursor; the sequence is MAMVPEITCD…EEPITFKNCD (112 aa).

Belongs to the IL-1 family. In terms of assembly, monomer. In its precursor form, weakly interacts with full-length MEFV; the mature cytokine does not interact at all. Interacts with integrins ITGAV:ITGBV and ITGA5:ITGB1; integrin-binding is required for IL1B signaling. Interacts with cargo receptor TMED10; the interaction is direct and is required for the secretion of IL1B mature form. Interacts with HSP90AB1; the interaction facilitates cargo translocation into the ERGIC. Interacts with HSP90B1; the interaction facilitates cargo translocation into the ERGIC.

It localises to the cytoplasm. It is found in the cytosol. Its subcellular location is the secreted. The protein resides in the lysosome. The protein localises to the extracellular exosome. In terms of biological role, potent pro-inflammatory cytokine. Initially discovered as the major endogenous pyrogen, induces prostaglandin synthesis, neutrophil influx and activation, T-cell activation and cytokine production, B-cell activation and antibody production, and fibroblast proliferation and collagen production. Promotes Th17 differentiation of T-cells. Synergizes with IL12/interleukin-12 to induce IFNG synthesis from T-helper 1 (Th1) cells. Plays a role in angiogenesis by inducing VEGF production synergistically with TNF and IL6. Involved in transduction of inflammation downstream of pyroptosis: its mature form is specifically released in the extracellular milieu by passing through the gasdermin-D (GSDMD) pore. This chain is Interleukin-1 beta (IL1B), found in Trichosurus vulpecula (Brush-tailed possum).